A 490-amino-acid polypeptide reads, in one-letter code: Subtilisin-like protease 8 (490 aa).

The first 26 residues, 1 to 26 (MKGLLSLSVLPVLAYASPMIVDSIHQ), serve as a signal peptide directing secretion. The propeptide occupies 27-134 (NAAPILSSTN…YIERDSEVHT (108 aa)). In terms of domain architecture, Inhibitor I9 spans 43–134 (SYIVVFKKGV…YIERDSEVHT (92 aa)). The Peptidase S8 domain occupies 144–450 (PWGLARISHR…GGSDDYKKII (307 aa)). Active-site charge relay system residues include aspartate 180 and histidine 212. A glycan (N-linked (GlcNAc...) asparagine) is linked at asparagine 282. The active-site Charge relay system is the serine 378. The N-linked (GlcNAc...) asparagine glycan is linked to asparagine 456.

This sequence belongs to the peptidase S8 family.

Its subcellular location is the secreted. Its function is as follows. Secreted subtilisin-like serine protease with keratinolytic activity that contributes to pathogenicity. The polypeptide is Subtilisin-like protease 8 (SUB8) (Arthroderma benhamiae (strain ATCC MYA-4681 / CBS 112371) (Trichophyton mentagrophytes)).